Reading from the N-terminus, the 426-residue chain is Histone-binding protein RBBP7 (426 aa).

An N-acetylalanine modification is found at alanine 2. Serine 3 carries the post-translational modification Phosphoserine. N6-acetyllysine; alternate is present on lysine 4. Lysine 4 participates in a covalent cross-link: Glycyl lysine isopeptide (Lys-Gly) (interchain with G-Cter in SUMO2); alternate. A Glycyl lysine isopeptide (Lys-Gly) (interchain with G-Cter in ubiquitin); alternate cross-link involves residue lysine 4. Threonine 10 bears the Phosphothreonine mark. 7 WD repeats span residues 47–122 (QWLP…KINH), 128–173 (RARY…LRLR), 181–217 (GLSW…KIVD), 228–269 (VVED…HLVD), 275–312 (VNCL…LHTF), 318–370 (EIFQ…LFIH), and 377–404 (ISDF…IWQM). Serine 95 carries the phosphoserine modification. A Glycyl lysine isopeptide (Lys-Gly) (interchain with G-Cter in SUMO2) cross-link involves residue lysine 101. The residue at position 119 (lysine 119) is an N6-acetyllysine. Lysine 155 participates in a covalent cross-link: Glycyl lysine isopeptide (Lys-Gly) (interchain with G-Cter in SUMO2). Lysine 159 bears the N6-acetyllysine; alternate mark. Lysine 159 is covalently cross-linked (Glycyl lysine isopeptide (Lys-Gly) (interchain with G-Cter in SUMO2); alternate). Serine 355 bears the Phosphoserine mark.

The protein belongs to the WD repeat RBAP46/RBAP48/MSI1 family. As to quaternary structure, binds directly to helix 1 of the histone fold of histone H4, a region that is not accessible when H4 is in chromatin. Subunit of the type B histone acetyltransferase (HAT) complex, composed of RBBP7 and HAT1. Subunit of the core histone deacetylase (HDAC) complex, which is composed of HDAC1, HDAC2, RBBP4 and RBBP7. The core HDAC complex associates with SIN3A, ARID4B/SAP180, SAP18, SAP30, SAP130, SUDS3/SAP45 and possibly ARID4A/RBP1 and ING1 to form the SIN3 HDAC complex. Component of the nucleosome remodeling and deacetylase (NuRD) repressor complex, composed of core proteins MTA1, MTA2, MTA3, RBBP4, RBBP7, HDAC1, HDAC2, MBD2, MBD3, and peripherally associated proteins CDK2AP1, CDK2AP2, GATAD2A, GATAD2B, CHD3, CHD4 and CHD5. The exact stoichiometry of the NuRD complex is unknown, and some subunits such as MBD2 and MBD3, GATAD2A and GATAD2B, and CHD3, CHD4 and CHD5 define mutually exclusive NuRD complexes. The NuRD complex may interact with MBD3L1. The NuRD complex may interact with MBD3L2. Subunit of the PRC2/EED-EZH2 complex, which is composed of at least EED, EZH2, RBBP4, RBBP7 and SUZ12. The PRC2/EED-EZH2 complex may also associate with HDAC1. Component of the NURF-1 ISWI chromatin remodeling complex (also called the nucleosome-remodeling factor (NURF) complex) at least composed of SMARCA1, BPTF, RBBP4 and RBBP7. Within the complex interacts with SMARCA1. Component of the BPFT-SMARCA1 complex at least composed of SMARCA1, BPFT, RBBP4 and RBBP7; the complex is catalytically inactive and does not remodel chromatin. Within the complex interacts with SMARCA1. Interacts with BRCA1. Interacts with CDK2AP1. Interacts with CENPA. Interacts with CHD3. Interacts with CHD4. Interacts with CREBBP, and this interaction may be enhanced by the binding of phosphorylated CREB1 to CREBBP. Interacts with HDAC7. Interacts with MTA1. Interacts with PWWP2B. Interacts with RB1 (via viral protein-binding domain). Interacts with SUV39H1.

It localises to the nucleus. Functionally, core histone-binding subunit that may target chromatin remodeling factors, histone acetyltransferases and histone deacetylases to their histone substrates in a manner that is regulated by nucleosomal DNA. Component of several complexes which regulate chromatin metabolism. These include the type B histone acetyltransferase (HAT) complex, which is required for chromatin assembly following DNA replication; the core histone deacetylase (HDAC) complex, which promotes histone deacetylation and consequent transcriptional repression; the nucleosome remodeling and histone deacetylase complex (the NuRD complex), which promotes transcriptional repression by histone deacetylation and nucleosome remodeling; and the PRC2/EED-EZH2 complex, which promotes repression of homeotic genes during development; and the NURF (nucleosome remodeling factor) complex. The chain is Histone-binding protein RBBP7 (RBBP7) from Pongo abelii (Sumatran orangutan).